A 329-amino-acid chain; its full sequence is 4-hydroxythreonine-4-phosphate dehydrogenase (329 aa).

H136 and T137 together coordinate substrate. H166, H211, and H266 together coordinate a divalent metal cation. Residues K274, N283, and R292 each coordinate substrate.

The protein belongs to the PdxA family. Homodimer. Zn(2+) is required as a cofactor. It depends on Mg(2+) as a cofactor. The cofactor is Co(2+).

Its subcellular location is the cytoplasm. It carries out the reaction 4-(phosphooxy)-L-threonine + NAD(+) = 3-amino-2-oxopropyl phosphate + CO2 + NADH. Its pathway is cofactor biosynthesis; pyridoxine 5'-phosphate biosynthesis; pyridoxine 5'-phosphate from D-erythrose 4-phosphate: step 4/5. Catalyzes the NAD(P)-dependent oxidation of 4-(phosphooxy)-L-threonine (HTP) into 2-amino-3-oxo-4-(phosphooxy)butyric acid which spontaneously decarboxylates to form 3-amino-2-oxopropyl phosphate (AHAP). The protein is 4-hydroxythreonine-4-phosphate dehydrogenase of Escherichia coli (strain 55989 / EAEC).